A 487-amino-acid polypeptide reads, in one-letter code: NADH-quinone oxidoreductase subunit N (487 aa).

Helical transmembrane passes span 8–28 (LLAL…MLAI), 37–57 (AFVV…IVMA), 71–91 (GYAV…CTFG), 104–124 (EFYL…GSRH), 125–145 (LASL…LVGY), 159–179 (YMVL…LLYA), 203–223 (LMGG…LAPF), 235–255 (PAPV…CVLL), 269–289 (IHWL…LLAL), 303–323 (ISHF…QMPV), 327–347 (GVYL…ISMM), 374–394 (AVLT…GFIG), 408–427 (WWLS…YYLR), and 449–469 (AITS…ALGL).

Belongs to the complex I subunit 2 family. NDH-1 is composed of 14 different subunits. Subunits NuoA, H, J, K, L, M, N constitute the membrane sector of the complex.

The protein resides in the cell inner membrane. It catalyses the reaction a quinone + NADH + 5 H(+)(in) = a quinol + NAD(+) + 4 H(+)(out). In terms of biological role, NDH-1 shuttles electrons from NADH, via FMN and iron-sulfur (Fe-S) centers, to quinones in the respiratory chain. The immediate electron acceptor for the enzyme in this species is believed to be ubiquinone. Couples the redox reaction to proton translocation (for every two electrons transferred, four hydrogen ions are translocated across the cytoplasmic membrane), and thus conserves the redox energy in a proton gradient. The polypeptide is NADH-quinone oxidoreductase subunit N (Aeromonas hydrophila subsp. hydrophila (strain ATCC 7966 / DSM 30187 / BCRC 13018 / CCUG 14551 / JCM 1027 / KCTC 2358 / NCIMB 9240 / NCTC 8049)).